We begin with the raw amino-acid sequence, 359 residues long: 3-dehydroquinate synthase (359 aa).

Residues 71–76, 105–109, 129–130, Lys-142, and Lys-151 each bind NAD(+); these read DGEAYK, GVIGD, and TT. Positions 184, 247, and 264 each coordinate Zn(2+).

It belongs to the sugar phosphate cyclases superfamily. Dehydroquinate synthase family. Co(2+) is required as a cofactor. It depends on Zn(2+) as a cofactor. NAD(+) serves as cofactor.

Its subcellular location is the cytoplasm. The catalysed reaction is 7-phospho-2-dehydro-3-deoxy-D-arabino-heptonate = 3-dehydroquinate + phosphate. It functions in the pathway metabolic intermediate biosynthesis; chorismate biosynthesis; chorismate from D-erythrose 4-phosphate and phosphoenolpyruvate: step 2/7. In terms of biological role, catalyzes the conversion of 3-deoxy-D-arabino-heptulosonate 7-phosphate (DAHP) to dehydroquinate (DHQ). The protein is 3-dehydroquinate synthase of Burkholderia ambifaria (strain ATCC BAA-244 / DSM 16087 / CCUG 44356 / LMG 19182 / AMMD) (Burkholderia cepacia (strain AMMD)).